The following is a 126-amino-acid chain: Aspartate 1-decarboxylase (126 aa).

S25 (schiff-base intermediate with substrate; via pyruvic acid) is an active-site residue. S25 is modified (pyruvic acid (Ser)). Position 57 (T57) interacts with substrate. Y58 serves as the catalytic Proton donor. Position 73 to 75 (G73 to A75) interacts with substrate.

This sequence belongs to the PanD family. Heterooctamer of four alpha and four beta subunits. Pyruvate is required as a cofactor. Is synthesized initially as an inactive proenzyme, which is activated by self-cleavage at a specific serine bond to produce a beta-subunit with a hydroxyl group at its C-terminus and an alpha-subunit with a pyruvoyl group at its N-terminus.

The protein resides in the cytoplasm. It carries out the reaction L-aspartate + H(+) = beta-alanine + CO2. Its pathway is cofactor biosynthesis; (R)-pantothenate biosynthesis; beta-alanine from L-aspartate: step 1/1. In terms of biological role, catalyzes the pyruvoyl-dependent decarboxylation of aspartate to produce beta-alanine. The sequence is that of Aspartate 1-decarboxylase from Serratia proteamaculans (strain 568).